The following is a 498-amino-acid chain: ATP synthase subunit beta, chloroplastic (498 aa).

Position 172–179 (172–179) interacts with ATP; that stretch reads GGAGVGKT.

It belongs to the ATPase alpha/beta chains family. F-type ATPases have 2 components, CF(1) - the catalytic core - and CF(0) - the membrane proton channel. CF(1) has five subunits: alpha(3), beta(3), gamma(1), delta(1), epsilon(1). CF(0) has four main subunits: a(1), b(1), b'(1) and c(9-12).

It is found in the plastid. Its subcellular location is the chloroplast thylakoid membrane. The enzyme catalyses ATP + H2O + 4 H(+)(in) = ADP + phosphate + 5 H(+)(out). In terms of biological role, produces ATP from ADP in the presence of a proton gradient across the membrane. The catalytic sites are hosted primarily by the beta subunits. In Agrostis stolonifera (Creeping bentgrass), this protein is ATP synthase subunit beta, chloroplastic.